The primary structure comprises 436 residues: GTPase Der (436 aa).

EngA-type G domains are found at residues 4-167 (SVVA…PNES) and 176-351 (IYFS…ESHT). Residues 10–17 (GRPNVGKS), 57–61 (DTGGI), 119–122 (NKMD), 182–189 (GRPNVGKS), 229–233 (DTAGM), and 294–297 (NKWD) contribute to the GTP site. The KH-like domain occupies 352–436 (KRIPTNVLND…PIKLFARRRQ (85 aa)).

Belongs to the TRAFAC class TrmE-Era-EngA-EngB-Septin-like GTPase superfamily. EngA (Der) GTPase family. Associates with the 50S ribosomal subunit.

GTPase that plays an essential role in the late steps of ribosome biogenesis. This chain is GTPase Der, found in Oceanobacillus iheyensis (strain DSM 14371 / CIP 107618 / JCM 11309 / KCTC 3954 / HTE831).